A 305-amino-acid chain; its full sequence is Tyrosine recombinase XerC (305 aa).

One can recognise a Core-binding (CB) domain in the interval 4-95 (TSIQALINKW…AVKNFYRFLE (92 aa)). The region spanning 116–298 (LLPKALSEDD…SIKHLEAVYT (183 aa)) is the Tyr recombinase domain. Catalysis depends on residues R159, K182, H250, R253, and H276. The O-(3'-phospho-DNA)-tyrosine intermediate role is filled by Y285.

This sequence belongs to the 'phage' integrase family. XerC subfamily. As to quaternary structure, forms a cyclic heterotetrameric complex composed of two molecules of XerC and two molecules of XerD.

The protein localises to the cytoplasm. Its function is as follows. Site-specific tyrosine recombinase, which acts by catalyzing the cutting and rejoining of the recombining DNA molecules. The XerC-XerD complex is essential to convert dimers of the bacterial chromosome into monomers to permit their segregation at cell division. It also contributes to the segregational stability of plasmids. The sequence is that of Tyrosine recombinase XerC from Rickettsia massiliae (strain Mtu5).